The following is a 707-amino-acid chain: D-(-)-3-hydroxybutyrate oligomer hydrolase (707 aa).

The N-terminal stretch at 1 to 32 (MASVFKVRSASGHVPVVRTLAAMMAVTVVLTA) is a signal peptide. Catalysis depends on S321, which acts as the Charge relay system.

This sequence belongs to the D-(-)-3-hydroxybutyrate oligomer hydrolase family.

Its subcellular location is the secreted. The catalysed reaction is (3R)-hydroxybutanoate dimer + H2O = 2 (R)-3-hydroxybutanoate + H(+). It participates in lipid metabolism; butanoate metabolism. Participates in the degradation of poly-3-hydroxybutyrate (PHB). It works downstream of poly(3-hydroxybutyrate) depolymerase, hydrolyzing D(-)-3-hydroxybutyrate oligomers of various length (3HB-oligomers) into 3HB-monomers. The protein is D-(-)-3-hydroxybutyrate oligomer hydrolase of Paraburkholderia xenovorans (strain LB400).